We begin with the raw amino-acid sequence, 177 residues long: Large ribosomal subunit protein uL6 (177 aa).

The protein belongs to the universal ribosomal protein uL6 family. As to quaternary structure, part of the 50S ribosomal subunit.

Functionally, this protein binds to the 23S rRNA, and is important in its secondary structure. It is located near the subunit interface in the base of the L7/L12 stalk, and near the tRNA binding site of the peptidyltransferase center. The chain is Large ribosomal subunit protein uL6 from Vibrio campbellii (strain ATCC BAA-1116).